The primary structure comprises 448 residues: UDP-N-acetylmuramoylalanine--D-glutamate ligase (448 aa).

5 residues coordinate UDP-N-acetyl-alpha-D-muramoyl-L-alanine: K17, S18, T38, R39, and G78. Residue 116 to 122 (GSNAKST) participates in ATP binding. Residues A119, K120, S121, and T122 each coordinate ADP. UDP-N-acetyl-alpha-D-muramoyl-L-alanine is bound by residues N143 and H188. N278, R309, D324, and K326 together coordinate ADP.

This sequence belongs to the MurCDEF family.

Its subcellular location is the cytoplasm. It carries out the reaction UDP-N-acetyl-alpha-D-muramoyl-L-alanine + D-glutamate + ATP = UDP-N-acetyl-alpha-D-muramoyl-L-alanyl-D-glutamate + ADP + phosphate + H(+). Its pathway is cell wall biogenesis; peptidoglycan biosynthesis. In terms of biological role, involved in cell wall formation. Catalyzes the addition of D-glutamate to the peptidoglycan precursor UDP-N-acetylmuramoyl-L-alanine (UMA). In Pseudomonas aeruginosa (strain ATCC 15692 / DSM 22644 / CIP 104116 / JCM 14847 / LMG 12228 / 1C / PRS 101 / PAO1), this protein is UDP-N-acetylmuramoylalanine--D-glutamate ligase.